The chain runs to 120 residues: NAD(P)H-quinone oxidoreductase subunit 3, chloroplastic (120 aa).

3 helical membrane-spanning segments follow: residues 9-29 (IFWAFLIISSVIPILAFLISG), 64-84 (MFALVFVVFDVETVFLYPWAM), and 88-108 (VLGVSVFIEALIFVLIPIVGS).

The protein belongs to the complex I subunit 3 family. NDH is composed of at least 16 different subunits, 5 of which are encoded in the nucleus.

It is found in the plastid. The protein localises to the chloroplast thylakoid membrane. The enzyme catalyses a plastoquinone + NADH + (n+1) H(+)(in) = a plastoquinol + NAD(+) + n H(+)(out). It carries out the reaction a plastoquinone + NADPH + (n+1) H(+)(in) = a plastoquinol + NADP(+) + n H(+)(out). In terms of biological role, NDH shuttles electrons from NAD(P)H:plastoquinone, via FMN and iron-sulfur (Fe-S) centers, to quinones in the photosynthetic chain and possibly in a chloroplast respiratory chain. The immediate electron acceptor for the enzyme in this species is believed to be plastoquinone. Couples the redox reaction to proton translocation, and thus conserves the redox energy in a proton gradient. This is NAD(P)H-quinone oxidoreductase subunit 3, chloroplastic from Calycanthus floridus var. glaucus (Eastern sweetshrub).